Reading from the N-terminus, the 308-residue chain is Aspartate carbamoyltransferase catalytic subunit (308 aa).

Positions 58 and 59 each coordinate carbamoyl phosphate. An L-aspartate-binding site is contributed by Lys-86. Carbamoyl phosphate-binding residues include Arg-108, His-136, and Gln-139. L-aspartate contacts are provided by Arg-169 and Arg-227. Residues Gly-268 and Pro-269 each coordinate carbamoyl phosphate.

This sequence belongs to the aspartate/ornithine carbamoyltransferase superfamily. ATCase family. As to quaternary structure, heterododecamer (2C3:3R2) of six catalytic PyrB chains organized as two trimers (C3), and six regulatory PyrI chains organized as three dimers (R2).

It catalyses the reaction carbamoyl phosphate + L-aspartate = N-carbamoyl-L-aspartate + phosphate + H(+). It participates in pyrimidine metabolism; UMP biosynthesis via de novo pathway; (S)-dihydroorotate from bicarbonate: step 2/3. Catalyzes the condensation of carbamoyl phosphate and aspartate to form carbamoyl aspartate and inorganic phosphate, the committed step in the de novo pyrimidine nucleotide biosynthesis pathway. The sequence is that of Aspartate carbamoyltransferase catalytic subunit from Chloroflexus aggregans (strain MD-66 / DSM 9485).